Consider the following 213-residue polypeptide: Glycerol-3-phosphate acyltransferase (213 aa).

Helical transmembrane passes span 2–22 (ITIVLLILAYLLGSIPSGLWI), 52–74 (AGMATFVIDFFKGTLATLLPIIF), 81–100 (PLIFGLLAVIGHTFPIFAGF), 112–132 (VIFGFAPIFCLYLAIIFFGAL), 143–163 (VTASIAAVIGVLLFPLFGFIL), and 164–184 (SNYDSLFITIILALASLIIIR).

The protein belongs to the PlsY family. Probably interacts with PlsX.

Its subcellular location is the cell membrane. The catalysed reaction is an acyl phosphate + sn-glycerol 3-phosphate = a 1-acyl-sn-glycero-3-phosphate + phosphate. It functions in the pathway lipid metabolism; phospholipid metabolism. Its function is as follows. Catalyzes the transfer of an acyl group from acyl-phosphate (acyl-PO(4)) to glycerol-3-phosphate (G3P) to form lysophosphatidic acid (LPA). This enzyme utilizes acyl-phosphate as fatty acyl donor, but not acyl-CoA or acyl-ACP. The protein is Glycerol-3-phosphate acyltransferase of Streptococcus pneumoniae (strain Hungary19A-6).